A 721-amino-acid chain; its full sequence is Polyribonucleotide nucleotidyltransferase (721 aa).

The Mg(2+) site is built by D495 and D501. Positions 562-621 (PRLLSFRIDPELIGTVIGPGGRTIKGITERTNTKIDIEDGGIVTIASHDGAAAEEAQKII) constitute a KH domain. Positions 631-699 (GEIFPGVVTR…SRGRINLTLR (69 aa)) constitute an S1 motif domain.

Belongs to the polyribonucleotide nucleotidyltransferase family. Mg(2+) is required as a cofactor.

The protein localises to the cytoplasm. It catalyses the reaction RNA(n+1) + phosphate = RNA(n) + a ribonucleoside 5'-diphosphate. Functionally, involved in mRNA degradation. Catalyzes the phosphorolysis of single-stranded polyribonucleotides processively in the 3'- to 5'-direction. This chain is Polyribonucleotide nucleotidyltransferase, found in Prochlorococcus marinus subsp. pastoris (strain CCMP1986 / NIES-2087 / MED4).